We begin with the raw amino-acid sequence, 305 residues long: UDP-3-O-acyl-N-acetylglucosamine deacetylase (305 aa).

Positions 79, 238, and 242 each coordinate Zn(2+). The active-site Proton donor is H265.

It belongs to the LpxC family. Zn(2+) is required as a cofactor.

It carries out the reaction a UDP-3-O-[(3R)-3-hydroxyacyl]-N-acetyl-alpha-D-glucosamine + H2O = a UDP-3-O-[(3R)-3-hydroxyacyl]-alpha-D-glucosamine + acetate. It participates in glycolipid biosynthesis; lipid IV(A) biosynthesis; lipid IV(A) from (3R)-3-hydroxytetradecanoyl-[acyl-carrier-protein] and UDP-N-acetyl-alpha-D-glucosamine: step 2/6. Its function is as follows. Catalyzes the hydrolysis of UDP-3-O-myristoyl-N-acetylglucosamine to form UDP-3-O-myristoylglucosamine and acetate, the committed step in lipid A biosynthesis. The chain is UDP-3-O-acyl-N-acetylglucosamine deacetylase from Erwinia tasmaniensis (strain DSM 17950 / CFBP 7177 / CIP 109463 / NCPPB 4357 / Et1/99).